A 121-amino-acid polypeptide reads, in one-letter code: Large ribosomal subunit protein bL20 (121 aa).

Belongs to the bacterial ribosomal protein bL20 family.

In terms of biological role, binds directly to 23S ribosomal RNA and is necessary for the in vitro assembly process of the 50S ribosomal subunit. It is not involved in the protein synthesizing functions of that subunit. The sequence is that of Large ribosomal subunit protein bL20 from Chlamydia felis (strain Fe/C-56) (Chlamydophila felis).